The sequence spans 112 residues: 2Fe-2S ferredoxin (112 aa).

In terms of domain architecture, 2Fe-2S ferredoxin-type spans 5-107 (IKVTFIVNDG…GIKVRLPSAT (103 aa)). [2Fe-2S] cluster contacts are provided by Cys42, Cys48, Cys51, and Cys88.

This sequence belongs to the adrenodoxin/putidaredoxin family. Requires [2Fe-2S] cluster as cofactor.

Its function is as follows. Ferredoxin are iron-sulfur proteins that transfer electrons in a wide variety of metabolic reactions. The chain is 2Fe-2S ferredoxin (fdxB) from Rickettsia felis (strain ATCC VR-1525 / URRWXCal2) (Rickettsia azadi).